The following is a 155-amino-acid chain: Ribosome-binding factor A (155 aa).

It belongs to the RbfA family. As to quaternary structure, monomer. Binds 30S ribosomal subunits, but not 50S ribosomal subunits or 70S ribosomes.

Its subcellular location is the cytoplasm. Functionally, one of several proteins that assist in the late maturation steps of the functional core of the 30S ribosomal subunit. Associates with free 30S ribosomal subunits (but not with 30S subunits that are part of 70S ribosomes or polysomes). Required for efficient processing of 16S rRNA. May interact with the 5'-terminal helix region of 16S rRNA. The sequence is that of Ribosome-binding factor A from Methylocella silvestris (strain DSM 15510 / CIP 108128 / LMG 27833 / NCIMB 13906 / BL2).